A 506-amino-acid polypeptide reads, in one-letter code: 2-isopropylmalate synthase (506 aa).

The Pyruvate carboxyltransferase domain occupies 4-266 (ILFMDTTLRD…EPSMTLKEIK (263 aa)). Positions 13, 201, 203, and 237 each coordinate Mn(2+). The tract at residues 390-506 (NITQLQVHFV…KLKSFIQLVK (117 aa)) is regulatory domain.

It belongs to the alpha-IPM synthase/homocitrate synthase family. LeuA type 1 subfamily. In terms of assembly, homodimer. It depends on Mn(2+) as a cofactor.

Its subcellular location is the cytoplasm. It catalyses the reaction 3-methyl-2-oxobutanoate + acetyl-CoA + H2O = (2S)-2-isopropylmalate + CoA + H(+). Its pathway is amino-acid biosynthesis; L-leucine biosynthesis; L-leucine from 3-methyl-2-oxobutanoate: step 1/4. Functionally, catalyzes the condensation of the acetyl group of acetyl-CoA with 3-methyl-2-oxobutanoate (2-ketoisovalerate) to form 3-carboxy-3-hydroxy-4-methylpentanoate (2-isopropylmalate). In Bacillus cereus (strain ATCC 10987 / NRS 248), this protein is 2-isopropylmalate synthase.